Reading from the N-terminus, the 468-residue chain is ATP synthase subunit beta (468 aa).

155–162 (GGAGVGKT) serves as a coordination point for ATP.

It belongs to the ATPase alpha/beta chains family. As to quaternary structure, F-type ATPases have 2 components, CF(1) - the catalytic core - and CF(0) - the membrane proton channel. CF(1) has five subunits: alpha(3), beta(3), gamma(1), delta(1), epsilon(1). CF(0) has three main subunits: a(1), b(2) and c(9-12). The alpha and beta chains form an alternating ring which encloses part of the gamma chain. CF(1) is attached to CF(0) by a central stalk formed by the gamma and epsilon chains, while a peripheral stalk is formed by the delta and b chains.

It localises to the cell inner membrane. The enzyme catalyses ATP + H2O + 4 H(+)(in) = ADP + phosphate + 5 H(+)(out). Its function is as follows. Produces ATP from ADP in the presence of a proton gradient across the membrane. The catalytic sites are hosted primarily by the beta subunits. This Thermotoga petrophila (strain ATCC BAA-488 / DSM 13995 / JCM 10881 / RKU-1) protein is ATP synthase subunit beta.